The following is a 383-amino-acid chain: Neuropeptide Y receptor type 1 (383 aa).

Over 1 to 44 (MNSTSFSQVENHSIYYNFSEKNSRFLAFENDDCHLPLAMIFTLA) the chain is Extracellular. N-linked (GlcNAc...) asparagine glycans are attached at residues Asn-2, Asn-11, and Asn-17. A helical membrane pass occupies residues 45-65 (LAYGAVIILGVSGNLALIIII). Residues 66 to 76 (LKQKEMRNVTN) are Cytoplasmic-facing. Residues 77 to 97 (ILIVNLSFSDLLVAIMCLPFT) form a helical membrane-spanning segment. Over 98–116 (FVYTLMDHWVFGEAMCKLN) the chain is Extracellular. Residues Cys-113 and Cys-198 are joined by a disulfide bond. The helical transmembrane segment at 117–137 (PFVQCVSITVSIFSLVLIAVE) threads the bilayer. Topologically, residues 138–154 (RHQLIINPRGWRPNNRH) are cytoplasmic. A helical transmembrane segment spans residues 155 to 175 (AYVGIAVIWVLAVASSLPFLI). The Extracellular portion of the chain corresponds to 176-211 (YQVLTDEPFQNVTLDAFKDKYVCFDKFPSDSHRLSY). The N-linked (GlcNAc...) asparagine glycan is linked to Asn-186. The chain crosses the membrane as a helical span at residues 212 to 232 (TTLLLVLQYFGPLCFIFICYF). Residues 233 to 260 (KIYVRLKRRNSMMDKMRDNKYRSSEAKR) are Cytoplasmic-facing. A helical membrane pass occupies residues 261-281 (INIMLLSIVVAFAVCWLPLTI). Over 282 to 299 (FNTVFDWDHQIIATCNHN) the chain is Extracellular. Residues 300-320 (LLFLLCHLTAMISTCVNPIFY) form a helical membrane-spanning segment. Residues 321-383 (GFLNKNFQRD…KIHTDDNEKI (63 aa)) are Cytoplasmic-facing. The S-palmitoyl cysteine moiety is linked to residue Cys-338. Position 368 is a phosphoserine (Ser-368).

This sequence belongs to the G-protein coupled receptor 1 family.

It is found in the cell membrane. Functionally, receptor for neuropeptide Y and peptide YY. This is Neuropeptide Y receptor type 1 (NPY1R) from Bos taurus (Bovine).